The following is a 267-amino-acid chain: Exosome complex component Rrp42 (267 aa).

This sequence belongs to the RNase PH family. Rrp42 subfamily. In terms of assembly, component of the archaeal exosome complex. Forms a hexameric ring-like arrangement composed of 3 Rrp41-Rrp42 heterodimers. The hexameric ring associates with a trimer of Rrp4 and/or Csl4 subunits.

The protein resides in the cytoplasm. Non-catalytic component of the exosome, which is a complex involved in RNA degradation. Contributes to the structuring of the Rrp41 active site. This chain is Exosome complex component Rrp42, found in Methanopyrus kandleri (strain AV19 / DSM 6324 / JCM 9639 / NBRC 100938).